The sequence spans 265 residues: Cell division protein FtsQ (265 aa).

Residues 1-13 (MAGATTAKGGARR) show a composition bias toward low complexity. The interval 1–25 (MAGATTAKGGARRTPPPGPPPPALK) is disordered. The Cytoplasmic segment spans residues 1-35 (MAGATTAKGGARRTPPPGPPPPALKARRRLRLPRR). Pro residues predominate over residues 14–23 (TPPPGPPPPA). The helical transmembrane segment at 36 to 58 (RTLLVTGVATALLGSGVTWLLYG) threads the bilayer. Topologically, residues 59–265 (SSWLRVEQVA…APTAPAVTHS (207 aa)) are extracellular. The POTRA domain maps to 62–131 (LRVEQVAVSG…DTIAVRVTER (70 aa)).

Belongs to the FtsQ/DivIB family. FtsQ subfamily.

The protein localises to the cell membrane. Essential cell division protein. The polypeptide is Cell division protein FtsQ (Streptomyces bingchenggensis (strain BCW-1)).